The sequence spans 1672 residues: Probable outer membrane protein PmpB (1672 aa).

Residues 1-14 (MSSMKWLSATAVFA) form the signal peptide. Disordered regions lie at residues 69-122 (IPVK…GGAF), 203-263 (NTAE…GSGG), 384-415 (EAQT…AKGG), and 734-765 (STGV…PAPA). Composition is skewed to low complexity over residues 77 to 88 (DDSSTSTPTTSS), 100 to 111 (SSSSSPNSGDTS), and 203 to 234 (NTAE…SKVQ). 2 stretches are compositionally biased toward polar residues: residues 235-256 (SLFT…QTPS) and 384-399 (EAQT…SQSG). Residues 734-744 (STGVATTATTS) show a composition bias toward low complexity. Positions 1379-1672 (DDAAYNNFWV…MTSCGARMIF (294 aa)) constitute an Autotransporter domain.

This sequence belongs to the PMP outer membrane protein family.

Its subcellular location is the secreted. The protein resides in the cell wall. It localises to the cell outer membrane. The polypeptide is Probable outer membrane protein PmpB (pmpB) (Chlamydia muridarum (strain MoPn / Nigg)).